The chain runs to 62 residues: Large ribosomal subunit protein bL32 (62 aa).

Over residues 1–16 the composition is skewed to basic residues; the sequence is MAVPKRKTSPSRRGMR. Positions 1–62 are disordered; that stretch reads MAVPKRKTSP…QILKPKTAEV (62 aa). The segment covering 28 to 44 has biased composition (basic and acidic residues); that stretch reads VEDKDSGELRRPHHLDL.

The protein belongs to the bacterial ribosomal protein bL32 family.

The chain is Large ribosomal subunit protein bL32 from Azorhizobium caulinodans (strain ATCC 43989 / DSM 5975 / JCM 20966 / LMG 6465 / NBRC 14845 / NCIMB 13405 / ORS 571).